The primary structure comprises 308 residues: Homeobox protein abdominal-A homolog (308 aa).

The homeobox DNA-binding region spans 138 to 197; it reads RRRGRQTYTRFQTLELEKEFHFNHYLTRRRRIEIAHALCLTERQIKIWFQNRRMKLKKEL. Over residues 207–221 the composition is skewed to basic and acidic residues; the sequence is ARREREEQDKMKNES. Residues 207-277 are disordered; sequence ARREREEQDK…SGNLGSHLHH (71 aa). The segment covering 223–247 has biased composition (low complexity); sequence KSAQQHHSQKQAQQEHTVVGSQQTS. Gly residues predominate over residues 248 to 269; that stretch reads NGGGTGGGTGGSGGAGSGGSSG.

The protein belongs to the Antp homeobox family.

It localises to the nucleus. Sequence-specific transcription factor which is part of a developmental regulatory system that provides cells with specific positional identities on the anterior-posterior axis. In Anopheles gambiae (African malaria mosquito), this protein is Homeobox protein abdominal-A homolog.